The sequence spans 286 residues: Putative electron transfer flavoprotein subunit YgcQ (286 aa).

Residue 225–253 coordinates FAD; it reads VCIVVGASGAAALMAGVRNSKFVVAINHD.

This sequence belongs to the ETF alpha-subunit/FixB family. In terms of assembly, ygcQ and YgcR form a heterodimer.

May play a role in a redox process. The polypeptide is Putative electron transfer flavoprotein subunit YgcQ (ygcQ) (Escherichia coli (strain K12)).